The chain runs to 479 residues: POU domain, class 2, transcription factor 2 (479 aa).

Disordered stretches follow at residues 1-86 (MVHS…AQPH), 166-200 (TQAV…PSDL), 275-298 (SSLP…GRRR), 357-393 (PCSA…SQAS), and 409-479 (TLHP…PYQP). A compositionally biased stretch (basic and acidic residues) spans 12-37 (RMSKPLEAEKQGLDSPSEHTDTERNG). Residues 38-60 (PDTNHQNPQNKTSPFSVSPTGPS) show a composition bias toward polar residues. Pro residues predominate over residues 76-85 (APLPPQPAQP). The region spanning 195 to 269 (EEPSDLEELE…LLEKWLNDAE (75 aa)) is the POU-specific domain. Residues 275-288 (SSLPSPNQLSSPSL) are compositionally biased toward low complexity. Residues 297 to 356 (RRKKRTSIETNVRFALEKSFLANQKPTSEEILLIAEQLHMEKEVIRVWFCNRRQKEKRIN) constitute a DNA-binding region (homeobox). Residues 389–410 (LSQASSSLSTTVTTLSSAVGTL) are leucine-zipper. The segment covering 416-425 (AGGGGGGGGA) has biased composition (gly residues).

This sequence belongs to the POU transcription factor family. Class-2 subfamily. As to quaternary structure, interacts with NR3C1, AR and PGR. Interacts with POU2AF1; the interaction increases POU2F2 transactivation activity. As to expression, isoform 3 is B-cell specific. Isoform 5 is expressed in B-cells and the immunoglobulin-expressing T-cell line MOLT-4, but not in the T-cell line BW5147.

It is found in the cytoplasm. Its subcellular location is the nucleus. Its activity is regulated as follows. Transactivation activity is enhanced by transcriptional coactivator POU2AF1. Functionally, transcription factor that specifically binds to the octamer motif (5'-ATTTGCAT-3'). Regulates IL6 expression in B cells with POU2AF1. Regulates transcription in a number of tissues in addition to activating immunoglobulin gene expression. Modulates transcription transactivation by NR3C1, AR and PGR. In terms of biological role, activates the U2 small nuclear RNA (snRNA) promoter. This chain is POU domain, class 2, transcription factor 2, found in Homo sapiens (Human).